A 254-amino-acid polypeptide reads, in one-letter code: Geranylgeranylglyceryl phosphate synthase (254 aa).

Residues D27 and S56 each contribute to the Mg(2+) site. Sn-glycerol 1-phosphate contacts are provided by residues 174–180 (YLEAGSG), 212–213 (GG), and 234–235 (GT).

Belongs to the GGGP/HepGP synthase family. Group II subfamily. Homohexamer. Requires Mg(2+) as cofactor.

It localises to the cytoplasm. It catalyses the reaction sn-glycerol 1-phosphate + (2E,6E,10E)-geranylgeranyl diphosphate = sn-3-O-(geranylgeranyl)glycerol 1-phosphate + diphosphate. It participates in membrane lipid metabolism; glycerophospholipid metabolism. In terms of biological role, prenyltransferase that catalyzes the transfer of the geranylgeranyl moiety of geranylgeranyl diphosphate (GGPP) to the C3 hydroxyl of sn-glycerol-1-phosphate (G1P). This reaction is the first ether-bond-formation step in the biosynthesis of archaeal membrane lipids. The polypeptide is Geranylgeranylglyceryl phosphate synthase (Aeropyrum pernix (strain ATCC 700893 / DSM 11879 / JCM 9820 / NBRC 100138 / K1)).